The sequence spans 130 residues: Small ribosomal subunit protein uS9 (130 aa).

It belongs to the universal ribosomal protein uS9 family.

The sequence is that of Small ribosomal subunit protein uS9 from Agathobacter rectalis (strain ATCC 33656 / DSM 3377 / JCM 17463 / KCTC 5835 / VPI 0990) (Eubacterium rectale).